The sequence spans 457 residues: MERTTLRRRALVAGTATVAVGALALAGLTGVASADPAATAAPPVSADSLSPGMLAALERDLGLDEDAARSRIANEYRAAAVAAGLEKSLGARYAGARVSGAKATLTVATTDASEAARITEAGARAEVVGHSLDRFEGVKKSLDKAALDKAPKNVPVWYVDVAANRVVVNAASPAAGQAFLKVAGVDRGLVTVARSAEQPRALADIRGGDAYYMNGSGRCSVGFSVTRGTQNGFATAGHCGRVGTTTNGVNQQAQGTFQGSTFPGRDIAWVATNANWTPRPLVNGYGRGDVTVAGSTASVVGASVCRSGSTTGWHCGTIQQLNTSVTYPEGTISGVTRTSVCAEPGDSGGSYISGSQAQGVTSGGSGNCSSGGTTYFQPINPLLQAYGLTLVTSGGGTPTDPPTTPPTDSPGGTWAVGTAYAAGATVTYGGATYRCLQAHTAQPGWTPADVPALWQRV.

Residues 1 to 34 (MERTTLRRRALVAGTATVAVGALALAGLTGVASA) constitute a signal peptide (tat-type signal). Residues 35–202 (DPAATAAPPV…ARSAEQPRAL (168 aa)) constitute a propeptide that is removed on maturation. A catalytic region spans residues 203 to 393 (ADIRGGDAYY…QAYGLTLVTS (191 aa)). Cysteines 219 and 239 form a disulfide. Catalysis depends on charge relay system residues H238 and D266. 2 disulfides stabilise this stretch: C305–C315 and C341–C368. Residue S347 is the Charge relay system of the active site. The disordered stretch occupies residues 393 to 412 (SGGGTPTDPPTTPPTDSPGG). Positions 394 to 413 (GGGTPTDPPTTPPTDSPGGT) are linker. Over residues 399–408 (TDPPTTPPTD) the composition is skewed to pro residues. Positions 415–457 (AVGTAYAAGATVTYGGATYRCLQAHTAQPGWTPADVPALWQRV) constitute a Chitin-binding type-3 domain.

This sequence belongs to the peptidase S1 family. Monomer. Predicted to be exported by the Tat system. The position of the signal peptide cleavage has not been experimentally proven.

Functionally, hydrolysis of proteins with specificity similar to chymotrypsin. May be specialized for the degradation of chitin-linked proteins. Has a primary specificity for large aliphatic or aromatic amino acids. In Streptomyces griseus, this protein is Streptogrisin-C (sprC).